The chain runs to 2116 residues: Myosin-2 heavy chain (2116 aa).

The Myosin N-terminal SH3-like domain occupies 30–82 (SDKRYIWYNPDPKERDSYECGEIVSETSDSFTFKTVDGQDRQVKKDDANQRNP). The region spanning 86 to 759 (DGVEDMSELS…QLARIEEARE (674 aa)) is the Myosin motor domain. N6,N6-dimethyllysine is present on lysine 130. 179-186 (GESGAGKT) serves as a coordination point for ATP. 2 actin-binding regions span residues 638-660 (LASL…IPNN) and 738-752 (RFGI…GQLA). The IQ domain occupies 762 to 791 (ISEIIKAIQAATRGWIARKVYKQAREHTVA). Residues 817–2116 (ARPLLKRRNF…MADFFGGFKA (1300 aa)) adopt a coiled-coil conformation. Disordered stretches follow at residues 1295-1314 (VNEQ…KRKV), 1363-1399 (DKSV…SKKK), 1415-1444 (TAKK…DAKN), 1711-1731 (VRDQ…SKRR), 1771-1791 (LEDE…LESE), and 1805-1844 (NRSR…AAKL). Composition is skewed to basic and acidic residues over residues 1375 to 1399 (KNEE…SKKK), 1415 to 1443 (TAKK…DDAK), and 1722 to 1731 (RSELEDSKRR). Positions 1805–1832 (NRSRAEKDRKKYEKDLKDTKYKLNDEAA) are enriched in basic and acidic residues. A phosphothreonine; by MHCK mark is found at threonine 1823, threonine 1833, and threonine 2029.

The protein belongs to the TRAFAC class myosin-kinesin ATPase superfamily. Myosin family. In terms of assembly, myosin-2 heavy chain is two-headed. It self-assembles into filaments. Hexamer of 2 heavy chain subunits (MHC), 2 alkali light chain subunits (MLC) and 2 regulatory light chain subunits (MLC-2). Associates with elmoA. In terms of processing, phosphorylation inhibits thick filament formation and reduces the actin-activated ATPase activity.

Its subcellular location is the cytoplasm. It localises to the cell cortex. In terms of biological role, myosin is a protein that binds to actin and has ATPase activity that is activated by actin. In Dictyostelium discoideum (Social amoeba), this protein is Myosin-2 heavy chain (mhcA).